Reading from the N-terminus, the 613-residue chain is Leucine-rich repeat receptor-like protein FASCIATED EAR2 (613 aa).

The signal sequence occupies residues 1–28; it reads MLTATPLPHQLLATFLLVLASATQPAVP. Residues 29–573 lie on the Extracellular side of the membrane; the sequence is ASTDRAALLA…WLGGWHGENG (545 aa). LRR repeat units follow at residues 79–103, 104–128, 130–150, 151–176, 178–199, 202–226, 227–250, 251–274, 276–297, 298–322, 324–346, 347–370, 372–394, 435–459, 460–483, 484–507, and 508–531; these read TPSV…PLAL, LRRL…LPRS, LALD…LPSS, LPAL…SFPA, LAAL…IVAD, NSAL…IAAV, RSLQ…IGNL, TYLQ…LAGC, QLLY…ELDA, LASL…LAGC, SLEV…VAKW, LSLK…MFSF, LLQW…GFNV, VQAT…LVDM, KGLE…LGGM, GRLH…IAAM, and TVLE…KFPG. The N-linked (GlcNAc...) asparagine glycan is linked to asparagine 91. Asparagine 158 carries N-linked (GlcNAc...) asparagine glycosylation. Residue asparagine 249 is glycosylated (N-linked (GlcNAc...) asparagine). Asparagine 393 is a glycosylation site (N-linked (GlcNAc...) asparagine). Asparagine 466 is a glycosylation site (N-linked (GlcNAc...) asparagine). The N-linked (GlcNAc...) asparagine glycan is linked to asparagine 514. A helical transmembrane segment spans residues 574-597; the sequence is WVSLGAFCISTMTSFYVSLATLLC. At 598-613 the chain is on the cytoplasmic side; the sequence is SSNARNFVFRPVRVEY.

Expressed in ear primordia, vegetative apex and young leaf tissues. Barely detected in expanded leaf tissues and not expressed in roots.

Its subcellular location is the cell membrane. In terms of biological role, receptor-like protein that regulates shoot meristem proliferation. Based on additive and synergistic phenotypes of double mutants, it is probable that unlike CLV1 and CLV2 in A.thaliana, FAE2 and TD1 do not function exclusively in a single pathway. This chain is Leucine-rich repeat receptor-like protein FASCIATED EAR2 (FEA2), found in Zea mays (Maize).